Reading from the N-terminus, the 130-residue chain is Small ribosomal subunit protein uS11 (130 aa).

This sequence belongs to the universal ribosomal protein uS11 family. Part of the 30S ribosomal subunit. Interacts with proteins S7 and S18. Binds to IF-3.

In terms of biological role, located on the platform of the 30S subunit, it bridges several disparate RNA helices of the 16S rRNA. Forms part of the Shine-Dalgarno cleft in the 70S ribosome. In Nautilia profundicola (strain ATCC BAA-1463 / DSM 18972 / AmH), this protein is Small ribosomal subunit protein uS11.